The sequence spans 268 residues: ClpXP adapter protein SpxH (268 aa).

This sequence belongs to the SpxH family. In terms of assembly, interacts with Spx.

Its subcellular location is the cytoplasm. Functionally, adapter protein required for efficient degradation of Spx by ClpXP under non-stress conditions. Interaction with Spx stabilizes Spx and exposes the C-terminus of Spx for recognition and proteolysis by ClpXP. In Staphylococcus aureus (strain COL), this protein is ClpXP adapter protein SpxH.